The sequence spans 525 residues: Asparagine synthetase [glutamine-hydrolyzing] (525 aa).

C2 serves as the catalytic For GATase activity. One can recognise a Glutamine amidotransferase type-2 domain in the interval 2–185 (CGILAVLGCS…PGHLYSSKEG (184 aa)). L-glutamine is bound by residues 50–54 (RLAII), 75–77 (NGE), and D98. In terms of domain architecture, Asparagine synthetase spans 193–517 (PPWFSEVIPS…QIDSPWRSKC (325 aa)). ATP contacts are provided by residues L231, V267, and 341 to 342 (SG).

The catalysed reaction is L-aspartate + L-glutamine + ATP + H2O = L-asparagine + L-glutamate + AMP + diphosphate + H(+). It participates in amino-acid biosynthesis; L-asparagine biosynthesis; L-asparagine from L-aspartate (L-Gln route): step 1/1. Functionally, could play a role in remobilization of nitrogen in flowers during senescence. This is Asparagine synthetase [glutamine-hydrolyzing] (AND1) from Sandersonia aurantiaca (Christmas-bells).